A 2455-amino-acid polypeptide reads, in one-letter code: Ectopic P granules protein 5 homolog (2455 aa).

A disordered region spans residues 1-42 (MATLEKPKKEKSKKSRNRVPIEKEEEEPAELSTSEEQRPAEN). Residue Ser44 is modified to Phosphoserine. Residues 77-105 (VTSQEPEGTQEPTETEAQPSAPSAPPSTT) form a disordered region. Low complexity predominate over residues 80 to 97 (QEPEGTQEPTETEAQPSA). Ser467 carries the post-translational modification Phosphoserine.

This sequence belongs to the EPG5 family.

It localises to the cytoplasm. The protein localises to the perinuclear region. It is found in the lysosome. Involved in autophagy. Plays a role in late steps of autophagy. This is Ectopic P granules protein 5 homolog from Drosophila melanogaster (Fruit fly).